The sequence spans 560 residues: Putative transport protein VP1232 (560 aa).

The next 5 membrane-spanning stretches (helical) occupy residues 8–28 (LLDQNPILLIFVVLAIGLAIG), 37–57 (LGNSIGVLITSLIMGHLGFSF), 66–86 (FMLFIYCVGIEAGPNFFGIFF), 91–111 (HYFILSMTVLVAAVSLTYGLS), and 164–184 (VGYAMAYLIGLISMIMFAKLL). RCK C-terminal domains are found at residues 205–292 (LGNS…FRNG) and 293–376 (KEVF…KIGF). The next 6 membrane-spanning stretches (helical) occupy residues 386–406 (LLAFCSFFILGIMFGLVTMTF), 409–429 (VSFSLGNAVGLLLSGITLGFL), 443–463 (ALNMVKDLGLMFFMVGIGLSA), 478–498 (VIGLAFIVSVVPVVIAYLVGA), 506–526 (ALLFGAIIGARTCAPAMDVVN), and 539–559 (AGTYAIANILMTLAGTILIIL).

Belongs to the AAE transporter (TC 2.A.81) family. YbjL subfamily.

The protein localises to the cell membrane. The chain is Putative transport protein VP1232 from Vibrio parahaemolyticus serotype O3:K6 (strain RIMD 2210633).